The chain runs to 507 residues: ATP synthase subunit alpha, chloroplastic (507 aa).

170–177 (GDRQTGKT) is a binding site for ATP. Residue threonine 257 is modified to Phosphothreonine.

Belongs to the ATPase alpha/beta chains family. F-type ATPases have 2 components, CF(1) - the catalytic core - and CF(0) - the membrane proton channel. CF(1) has five subunits: alpha(3), beta(3), gamma(1), delta(1), epsilon(1). CF(0) has four main subunits: a, b, b' and c.

The protein resides in the plastid. It is found in the chloroplast thylakoid membrane. It catalyses the reaction ATP + H2O + 4 H(+)(in) = ADP + phosphate + 5 H(+)(out). Its function is as follows. Produces ATP from ADP in the presence of a proton gradient across the membrane. The alpha chain is a regulatory subunit. This is ATP synthase subunit alpha, chloroplastic from Draba nemorosa (Woodland whitlowgrass).